The chain runs to 1212 residues: Nucleolar protein 6 (1212 aa).

Disordered stretches follow at residues 1–72 and 1156–1212; these read MGKI…PVSI and KREQ…KSLS. The segment covering 1197 to 1212 has biased composition (basic residues); it reads LKRKSLIKSRPLKSLS.

The protein belongs to the NRAP family. As to quaternary structure, part of the small subunit (SSU) processome, composed of more than 70 proteins and the RNA chaperone small nucleolar RNA (snoRNA) U3.

The protein resides in the nucleus. Its subcellular location is the nucleolus. It is found in the chromosome. Functionally, part of the small subunit (SSU) processome, first precursor of the small eukaryotic ribosomal subunit. During the assembly of the SSU processome in the nucleolus, many ribosome biogenesis factors, an RNA chaperone and ribosomal proteins associate with the nascent pre-rRNA and work in concert to generate RNA folding, modifications, rearrangements and cleavage as well as targeted degradation of pre-ribosomal RNA by the RNA exosome. This is Nucleolar protein 6 from Drosophila persimilis (Fruit fly).